A 527-amino-acid chain; its full sequence is Cytochrome b5 reductase 4 (527 aa).

The interval 1–24 (MLNVPSQAFPAAGSQQRVAPAGQS) is disordered. The region spanning 56–132 (LIEVTEDELK…LKECLVGRMA (77 aa)) is the Cytochrome b5 heme-binding domain. 2 residues coordinate heme: H91 and H114. The interval 138 to 171 (ALQAHTEKTESTHLNGLSAPPSLRPEPLSAPLPA) is disordered. The CS domain occupies 173–264 (DHRPRYDWFQ…SVKEKWTQLG (92 aa)). The region spanning 281 to 392 (LFYRECVLLS…GGPEGSFTLR (112 aa)) is the FAD-binding FR-type domain. Residues 372–387 (ANLPIGASLSVGGPEG) and 399–431 (HLYMLAAGTGFTPMARLIRLALQDFTVIRKMKL) contribute to the FAD site.

Belongs to the flavoprotein pyridine nucleotide cytochrome reductase family. The cofactor is FAD.

The protein localises to the endoplasmic reticulum. The enzyme catalyses 2 Fe(III)-[cytochrome b5] + NADH = 2 Fe(II)-[cytochrome b5] + NAD(+) + H(+). In terms of biological role, NADH-cytochrome b5 reductase involved in endoplasmic reticulum stress response pathway. The chain is Cytochrome b5 reductase 4 (cyb5r4) from Danio rerio (Zebrafish).